A 386-amino-acid chain; its full sequence is 5-amino-6-(D-ribitylamino)uracil--L-tyrosine 4-hydroxyphenyl transferase (386 aa).

The 248-residue stretch at 56–303 folds into the Radical SAM core domain; that stretch reads VSYVINRNLN…MAVARLYLGD (248 aa). The [4Fe-4S] cluster site is built by C70, C74, and C77.

It belongs to the radical SAM superfamily. CofH family. Consists of two subunits, CofG and CofH. [4Fe-4S] cluster serves as cofactor.

The enzyme catalyses 5-amino-6-(D-ribitylamino)uracil + L-tyrosine + S-adenosyl-L-methionine = 5-amino-5-(4-hydroxybenzyl)-6-(D-ribitylimino)-5,6-dihydrouracil + 2-iminoacetate + 5'-deoxyadenosine + L-methionine + H(+). The protein operates within cofactor biosynthesis; coenzyme F0 biosynthesis. Functionally, catalyzes the radical-mediated synthesis of 5-amino-5-(4-hydroxybenzyl)-6-(D-ribitylimino)-5,6-dihydrouracil from 5-amino-6-(D-ribitylamino)uracil and L-tyrosine. In Synechococcus elongatus (strain ATCC 33912 / PCC 7942 / FACHB-805) (Anacystis nidulans R2), this protein is 5-amino-6-(D-ribitylamino)uracil--L-tyrosine 4-hydroxyphenyl transferase.